The sequence spans 572 residues: Na(+)/citrate cotransporter (572 aa).

8 helical membrane passes run 13–33, 53–73, 80–100, 124–144, 218–238, 255–275, 315–335, and 357–377; these read SFVI…LVPD, VIPV…LKVL, VQYM…ATAV, LMLG…NTAT, AASI…VLLG, SWFA…WLWL, PLSY…ILWF, and HVTD…VPSQ. An N-linked (GlcNAc...) asparagine glycan is attached at asparagine 382. 4 consecutive transmembrane segments (helical) span residues 410–430, 443–463, 491–511, and 532–552; these read VPWG…GCET, PLSS…VAMT, PLYV…LPVA, and TGLV…NTWG. Asparagine 566 carries an N-linked (GlcNAc...) asparagine glycan.

The protein belongs to the SLC13A/DASS transporter (TC 2.A.47) family. NADC subfamily. Homodimer. As to expression, expressed in liver, testis and brain.

Its subcellular location is the cell membrane. It carries out the reaction citrate(out) + 4 Na(+)(out) = citrate(in) + 4 Na(+)(in). Its activity is regulated as follows. Inhibited by Li(+). Its function is as follows. High-affinity sodium/citrate cotransporter that mediates citrate entry into cells, which is a critical participant of biochemical pathways. May function in various metabolic processes in which citrate has a critical role such as energy production (Krebs cycle), fatty acid synthesis, cholesterol synthesis, glycolysis, and gluconeogenesis. Transports citrate into the cell in a Na(+)-dependent manner, recognizing the trivalent form of citrate (physiological pH) rather than the divalent form. Can recognize succinate as a substrate, but its affinity for succinate is several fold lower than for citrate. The stoichiometry is probably 4 Na(+) for each carboxylate, irrespective of whether the translocated substrate is divalent or trivalent, rendering the process electrogenic. Involved in the regulation of citrate levels in the brain. In Rattus norvegicus (Rat), this protein is Na(+)/citrate cotransporter (Slc13a5).